The sequence spans 352 residues: C-C chemokine receptor type 5 (352 aa).

The Extracellular portion of the chain corresponds to 1-30 (MDYEVSSPIYDIDYGASEPCQKIDVKQMGA). Sulfotyrosine is present on tyrosine 3. O-linked (GalNAc...) serine glycans are attached at residues serine 6 and serine 7. Sulfotyrosine is present on residues tyrosine 10 and tyrosine 14. Intrachain disulfides connect cysteine 20/cysteine 269 and cysteine 101/cysteine 178. Residues 31–58 (QLLPPLYSMVFLFGFVGNMLVVLILINC) form a helical membrane-spanning segment. The Cytoplasmic segment spans residues 59 to 68 (KRLKSMTDIY). A helical membrane pass occupies residues 69–89 (LLNLAISDLFFLFTVPFWAHY). Topologically, residues 90 to 102 (AAGQWDFGNTMCQ) are extracellular. The chain crosses the membrane as a helical span at residues 103–124 (FLTGLYFIGFFSGIFFIILLTI). Residues 125–141 (DRYLAIVHAVFALKART) lie on the Cytoplasmic side of the membrane. The helical transmembrane segment at 142–166 (VTFGVVTSVITWVVAVFASLPGIIF) threads the bilayer. Residues 167 to 198 (TRSQKEGYHYTCSPHFPFGQYRFWKNLETLKM) lie on the Extracellular side of the membrane. The helical transmembrane segment at 199 to 218 (VILGLVLPLLVMVICYSGIL) threads the bilayer. Residues 219–235 (KTLLRCRNEKKRHRAVR) are Cytoplasmic-facing. A helical membrane pass occupies residues 236–260 (LIFTIMIVYFLFWAPYNIVLLLNTY). Residues 261–277 (QEFFGLNNCSSSNRLDQ) lie on the Extracellular side of the membrane. A helical transmembrane segment spans residues 278–301 (AMQVTETLGMTHCCVNPIIYAFVG). At 302-352 (EKFRNYLLVFFQKHIAKRFCKCCSIFQKEAPERANSVYTRSTGEQEISVGL) the chain is on the cytoplasmic side. Residues cysteine 321, cysteine 323, and cysteine 324 are each lipidated (S-palmitoyl cysteine). Phosphoserine; by BARK1 is present on residues serine 337, serine 342, and serine 349.

The protein belongs to the G-protein coupled receptor 1 family. In terms of assembly, interacts with PRAF2. Efficient ligand binding to CCL3/MIP-1alpha and CCL4/MIP-1beta requires sulfation, O-glycosylation and sialic acid modifications. Glycosylation on Ser-6 is required for efficient binding of CCL4. Interacts with GRK2. Interacts with ARRB1 and ARRB2. Interacts with CNIH4. Interacts with S100A4; this interaction stimulates T-lymphocyte chemotaxis. Sulfated on at least 2 of the N-terminal tyrosines. Sulfation is required for efficient binding of the chemokines, CCL3 and CCL4. In terms of processing, palmitoylation in the C-terminal is important for cell surface expression. Post-translationally, phosphorylation on serine residues in the C-terminal is stimulated by binding CC chemokines especially by APO-RANTES. O-glycosylated, but not N-glycosylated. Ser-6 appears to be the major site even if Ser-7 may be also O-glycosylated. Also sialylated glycans present which contribute to chemokine binding. Ser-17 may also be glycosylated and, if so, with small moieties such as a T-antigen.

The protein localises to the cell membrane. Its function is as follows. Receptor for a number of inflammatory CC-chemokines including CCL3/MIP-1-alpha, CCL4/MIP-1-beta and RANTES and subsequently transduces a signal by increasing the intracellular calcium ion level. May play a role in the control of granulocytic lineage proliferation or differentiation. Participates in T-lymphocyte migration to the infection site by acting as a chemotactic receptor. In Plecturocebus moloch (Dusky titi monkey), this protein is C-C chemokine receptor type 5 (CCR5).